The sequence spans 472 residues: Glutamine synthetase (472 aa).

Residues 13 to 101 enclose the GS beta-grasp domain; sequence SKARFVDLRF…TCDVIDPADG (89 aa). One can recognise a GS catalytic domain in the interval 108 to 472; the sequence is PRSIARRAEA…PLEFEMYYSL (365 aa). Residues Glu133 and Glu135 each coordinate Mg(2+). ATP is bound at residue Glu211. Glu216 and Glu224 together coordinate Mg(2+). L-glutamate-binding positions include 268-269 and Gly269; that span reads NG. A Mg(2+)-binding site is contributed by His273. ATP contacts are provided by residues 275–277 and Ser277; that span reads HQS. Residues Arg325, Glu331, and Arg343 each coordinate L-glutamate. Residues Arg343, Arg348, and Lys356 each coordinate ATP. Glu361 contributes to the Mg(2+) binding site. Arg363 is a binding site for L-glutamate. An O-AMP-tyrosine modification is found at Tyr401.

It belongs to the glutamine synthetase family. Oligomer of 12 subunits arranged in the form of two hexameric ring. Requires Mg(2+) as cofactor.

It localises to the cytoplasm. It catalyses the reaction L-glutamate + NH4(+) + ATP = L-glutamine + ADP + phosphate + H(+). The activity of this enzyme could be controlled by adenylation under conditions of abundant glutamine. In terms of biological role, catalyzes the ATP-dependent biosynthesis of glutamine from glutamate and ammonia. The polypeptide is Glutamine synthetase (Neisseria gonorrhoeae).